Consider the following 540-residue polypeptide: Ipecac alkaloid beta-glucosidase 9 (540 aa).

A beta-D-glucoside-binding positions include Gln-36, His-140, Asn-185–Glu-186, Tyr-350, Glu-421, Trp-470, and Phe-486. Residue Glu-186 is the Proton donor of the active site. The active-site Nucleophile is the Glu-421.

The protein belongs to the glycosyl hydrolase 1 family.

It localises to the cytoplasm. The protein localises to the cytosol. The enzyme catalyses deacetylipecoside + H2O = deacetylipecoside aglycone + D-glucose. It carries out the reaction deacetylisoipecoside + H2O = deacetylisoipecoside aglycone + D-glucose. The protein operates within alkaloid biosynthesis. In terms of biological role, beta-glucosidase catalyzing deglucosylation on N-deacetylisoipecoside and N-deacetylipecoside. This chain is Ipecac alkaloid beta-glucosidase 9, found in Carapichea ipecacuanha (Ipecac).